The following is a 319-amino-acid chain: MNSSKSLRIVFAGTSQFSYEFLYALLESRHVVVGILANPDRFSGRGHKIKFSPVKKLAKYYNIKILQPDSTESLDNLENDLKKMRCDIIIVVSYSIILSKKILSLPRLGCINLHSSLLPRWRGAAPIHRALQSGDKTTGITIIKMNDEIDTGPILYKRVCSIQDTDTTETLLNKLSIIGKAAIIQLLHQISIGKYNLQYQNNSIATYAKKINKKEAKINWNLPAINIDRNIRAFNPWPVSYFWISGKYIRAWKAKIDINNIFISDPGKILNVNSDGIHVGTGKGILILEVLQLSGKKRSFVKESLCLYKKLFITGNIIQ.

116-119 (SLLP) serves as a coordination point for (6S)-5,6,7,8-tetrahydrofolate.

It belongs to the Fmt family.

The catalysed reaction is L-methionyl-tRNA(fMet) + (6R)-10-formyltetrahydrofolate = N-formyl-L-methionyl-tRNA(fMet) + (6S)-5,6,7,8-tetrahydrofolate + H(+). In terms of biological role, attaches a formyl group to the free amino group of methionyl-tRNA(fMet). The formyl group appears to play a dual role in the initiator identity of N-formylmethionyl-tRNA by promoting its recognition by IF2 and preventing the misappropriation of this tRNA by the elongation apparatus. This chain is Methionyl-tRNA formyltransferase, found in Wigglesworthia glossinidia brevipalpis.